The primary structure comprises 189 residues: Adenylate kinase homolog MTH_1663 (189 aa).

12–20 contributes to the ATP binding site; it reads GVPGTGKTT.

It belongs to the archaeal adenylate kinase family.

This is Adenylate kinase homolog MTH_1663 from Methanothermobacter thermautotrophicus (strain ATCC 29096 / DSM 1053 / JCM 10044 / NBRC 100330 / Delta H) (Methanobacterium thermoautotrophicum).